The following is a 266-amino-acid chain: Transcription factor BIP1 (266 aa).

The segment at 1 to 73 (MAMYMPSTAS…DREAQRAIRA (73 aa)) is disordered. Composition is skewed to polar residues over residues 7–22 (STASSTTHIRSPSGTP) and 47–56 (RSVSTLTPSQ). The bZIP domain occupies 54–95 (PSQLARKRANDREAQRAIRARTKEHIERLEREVEELKSKQNR). The segment at 59-81 (RKRANDREAQRAIRARTKEHIER) is basic motif. Over residues 61 to 73 (RANDREAQRAIRA) the composition is skewed to basic and acidic residues. Residues 82 to 89 (LEREVEEL) form a leucine-zipper region.

Belongs to the bZIP family. As to expression, expressed in appressoria.

It is found in the nucleus. Functionally, transcription factor that is required for infection of plants hosts. Is not implicated in the development of appressoria or the subsequent penetration of host leaves, but is necessary for the initial establishment of the fungus within plant cells by orchestrating the expression of a unique set of early invasion-related genes within appressoria, encoding secreted effectors, enzymes, secondary metabolism-related enzymes, and signaling membrane receptors. Controls the expression of targeted genes by interacting directly with a 5'-TGACTC-3' motif present in their promoters. The protein is Transcription factor BIP1 of Pyricularia oryzae (strain 70-15 / ATCC MYA-4617 / FGSC 8958) (Rice blast fungus).